The sequence spans 190 residues: Guanylate kinase (190 aa).

The Guanylate kinase-like domain occupies 8–188; it reads GRLVILAGPS…AVSAIKAVLL (181 aa). 15 to 22 provides a ligand contact to ATP; sequence GPSAVGKS.

The protein belongs to the guanylate kinase family.

The protein resides in the cytoplasm. It carries out the reaction GMP + ATP = GDP + ADP. Functionally, essential for recycling GMP and indirectly, cGMP. In Corynebacterium efficiens (strain DSM 44549 / YS-314 / AJ 12310 / JCM 11189 / NBRC 100395), this protein is Guanylate kinase.